Consider the following 292-residue polypeptide: Formamidopyrimidine-DNA glycosylase (292 aa).

Proline 2 functions as the Schiff-base intermediate with DNA in the catalytic mechanism. Glutamate 3 serves as the catalytic Proton donor. Lysine 58 (proton donor; for beta-elimination activity) is an active-site residue. Positions 98, 128, and 173 each coordinate DNA. An FPG-type zinc finger spans residues 258–292 (LVYDRAGQPCRVCATPVRQIVQGQRSTFYCPNCQH). Residue arginine 282 is the Proton donor; for delta-elimination activity of the active site.

It belongs to the FPG family. As to quaternary structure, monomer. It depends on Zn(2+) as a cofactor.

The catalysed reaction is Hydrolysis of DNA containing ring-opened 7-methylguanine residues, releasing 2,6-diamino-4-hydroxy-5-(N-methyl)formamidopyrimidine.. It catalyses the reaction 2'-deoxyribonucleotide-(2'-deoxyribose 5'-phosphate)-2'-deoxyribonucleotide-DNA = a 3'-end 2'-deoxyribonucleotide-(2,3-dehydro-2,3-deoxyribose 5'-phosphate)-DNA + a 5'-end 5'-phospho-2'-deoxyribonucleoside-DNA + H(+). In terms of biological role, involved in base excision repair of DNA damaged by oxidation or by mutagenic agents. Acts as a DNA glycosylase that recognizes and removes damaged bases. Has a preference for oxidized purines, such as 7,8-dihydro-8-oxoguanine (8-oxoG). Has AP (apurinic/apyrimidinic) lyase activity and introduces nicks in the DNA strand. Cleaves the DNA backbone by beta-delta elimination to generate a single-strand break at the site of the removed base with both 3'- and 5'-phosphates. The polypeptide is Formamidopyrimidine-DNA glycosylase (Cupriavidus necator (strain ATCC 17699 / DSM 428 / KCTC 22496 / NCIMB 10442 / H16 / Stanier 337) (Ralstonia eutropha)).